The primary structure comprises 355 residues: uncharacterized protein (355 aa).

Positions 9-75 (DYYDILNISV…KLREKYDKLG (67 aa)) constitute a J domain.

It belongs to the DnaJ family.

The protein resides in the cytoplasm. This is an uncharacterized protein from Schizosaccharomyces pombe (strain 972 / ATCC 24843) (Fission yeast).